We begin with the raw amino-acid sequence, 361 residues long: Putative F-box protein At3g25460 (361 aa).

The F-box domain occupies Met1–Lys45.

This is Putative F-box protein At3g25460 from Arabidopsis thaliana (Mouse-ear cress).